The chain runs to 232 residues: Orotidine 5'-phosphate decarboxylase (232 aa).

Residues Asp13, Lys35, 62 to 71 (DLKFHDIPNT), Thr122, Arg182, Gln191, Gly211, and Arg212 contribute to the substrate site. Catalysis depends on Lys64, which acts as the Proton donor.

Belongs to the OMP decarboxylase family. Type 1 subfamily. Homodimer.

The enzyme catalyses orotidine 5'-phosphate + H(+) = UMP + CO2. It functions in the pathway pyrimidine metabolism; UMP biosynthesis via de novo pathway; UMP from orotate: step 2/2. Catalyzes the decarboxylation of orotidine 5'-monophosphate (OMP) to uridine 5'-monophosphate (UMP). In Pseudomonas syringae pv. tomato (strain ATCC BAA-871 / DC3000), this protein is Orotidine 5'-phosphate decarboxylase.